Consider the following 145-residue polypeptide: uncharacterized protein (145 aa).

Residues 1-20 (MPSKVCTLILLFSVINQMKC) form the signal peptide.

This is an uncharacterized protein from Caenorhabditis elegans.